The following is a 145-amino-acid chain: Putative esterase PA1618 (145 aa).

It belongs to the thioesterase PaaI family.

This Pseudomonas aeruginosa (strain ATCC 15692 / DSM 22644 / CIP 104116 / JCM 14847 / LMG 12228 / 1C / PRS 101 / PAO1) protein is Putative esterase PA1618.